A 415-amino-acid polypeptide reads, in one-letter code: Zona pellucida-like domain-containing protein 1 (415 aa).

A signal peptide spans 1-19 (MEPIWLLLLLAIFTVSVSA). Topologically, residues 20-372 (QFNGYNCDAN…QQFQINSVTS (353 aa)) are extracellular. Residues 43–320 (YCGVQTITMK…PTCHNRDRRD (278 aa)) form the ZP domain. Cystine bridges form between cysteine 44-cysteine 155, cysteine 79-cysteine 104, cysteine 235-cysteine 296, and cysteine 255-cysteine 313. Residues 373 to 393 (ALISGVVILGATSLSFFIIAL) form a helical membrane-spanning segment. The Cytoplasmic portion of the chain corresponds to 394–415 (TLLNRKKQNSLVLCGIRNPVFN).

In terms of processing, proteolytically cleaved before the transmembrane segment to yield the secreted form found in the extracellular matrix of the cupula.

It is found in the cytoplasmic vesicle membrane. It localises to the secreted. Its subcellular location is the extracellular space. The protein resides in the extracellular matrix. Functionally, glycoprotein which is a component of the gelatinous extracellular matrix in the cupulae of the vestibular organ. This chain is Zona pellucida-like domain-containing protein 1 (zpld1), found in Xenopus laevis (African clawed frog).